We begin with the raw amino-acid sequence, 488 residues long: Cysteine--tRNA ligase (488 aa).

Cysteine 28 is a Zn(2+) binding site. Positions proline 30 to histidine 40 match the 'HIGH' region motif. Zn(2+) is bound by residues cysteine 209, histidine 239, and glutamate 243. Residues lysine 271–serine 275 carry the 'KMSKS' region motif. Residue lysine 274 participates in ATP binding.

Belongs to the class-I aminoacyl-tRNA synthetase family. In terms of assembly, monomer. It depends on Zn(2+) as a cofactor.

Its subcellular location is the cytoplasm. It catalyses the reaction tRNA(Cys) + L-cysteine + ATP = L-cysteinyl-tRNA(Cys) + AMP + diphosphate. The sequence is that of Cysteine--tRNA ligase from Helicobacter hepaticus (strain ATCC 51449 / 3B1).